Here is a 338-residue protein sequence, read N- to C-terminus: Ketol-acid reductoisomerase (NADP(+)) (338 aa).

The region spanning 1–181 is the KARI N-terminal Rossmann domain; it reads MKVFYDKDCD…GGGKAGIIET (181 aa). NADP(+) is bound by residues 24–27, R47, and S52; that span reads YGSQ. H107 is a catalytic residue. G133 provides a ligand contact to NADP(+). Residues 182 to 327 form the KARI C-terminal knotted domain; sequence NFKEETETDL…AQLRAMMPWI (146 aa). Residues D190, E194, E226, and E230 each coordinate Mg(2+). Residue S251 participates in substrate binding.

The protein belongs to the ketol-acid reductoisomerase family. The cofactor is Mg(2+).

The catalysed reaction is (2R)-2,3-dihydroxy-3-methylbutanoate + NADP(+) = (2S)-2-acetolactate + NADPH + H(+). It catalyses the reaction (2R,3R)-2,3-dihydroxy-3-methylpentanoate + NADP(+) = (S)-2-ethyl-2-hydroxy-3-oxobutanoate + NADPH + H(+). The protein operates within amino-acid biosynthesis; L-isoleucine biosynthesis; L-isoleucine from 2-oxobutanoate: step 2/4. It participates in amino-acid biosynthesis; L-valine biosynthesis; L-valine from pyruvate: step 2/4. Its function is as follows. Involved in the biosynthesis of branched-chain amino acids (BCAA). Catalyzes an alkyl-migration followed by a ketol-acid reduction of (S)-2-acetolactate (S2AL) to yield (R)-2,3-dihydroxy-isovalerate. In the isomerase reaction, S2AL is rearranged via a Mg-dependent methyl migration to produce 3-hydroxy-3-methyl-2-ketobutyrate (HMKB). In the reductase reaction, this 2-ketoacid undergoes a metal-dependent reduction by NADPH to yield (R)-2,3-dihydroxy-isovalerate. This Acidovorax ebreus (strain TPSY) (Diaphorobacter sp. (strain TPSY)) protein is Ketol-acid reductoisomerase (NADP(+)).